Consider the following 228-residue polypeptide: 5'-methylthioadenosine/S-adenosylhomocysteine nucleosidase (228 aa).

The active-site Proton acceptor is the Glu-11. Residues Gly-77, Ile-151, and 172 to 173 (ME) each bind substrate. Residue Asp-196 is the Proton donor of the active site.

The protein belongs to the PNP/UDP phosphorylase family. MtnN subfamily.

It catalyses the reaction S-adenosyl-L-homocysteine + H2O = S-(5-deoxy-D-ribos-5-yl)-L-homocysteine + adenine. The enzyme catalyses S-methyl-5'-thioadenosine + H2O = 5-(methylsulfanyl)-D-ribose + adenine. The catalysed reaction is 5'-deoxyadenosine + H2O = 5-deoxy-D-ribose + adenine. It functions in the pathway amino-acid biosynthesis; L-methionine biosynthesis via salvage pathway; S-methyl-5-thio-alpha-D-ribose 1-phosphate from S-methyl-5'-thioadenosine (hydrolase route): step 1/2. Catalyzes the irreversible cleavage of the glycosidic bond in both 5'-methylthioadenosine (MTA) and S-adenosylhomocysteine (SAH/AdoHcy) to adenine and the corresponding thioribose, 5'-methylthioribose and S-ribosylhomocysteine, respectively. Also cleaves 5'-deoxyadenosine, a toxic by-product of radical S-adenosylmethionine (SAM) enzymes, into 5-deoxyribose and adenine. This Staphylococcus aureus (strain bovine RF122 / ET3-1) protein is 5'-methylthioadenosine/S-adenosylhomocysteine nucleosidase.